The primary structure comprises 143 residues: ATP synthase subunit 9, mitochondrial (143 aa).

Residues 1 to 62 (MAASRVFAQR…ARQAFAARRQ (62 aa)) constitute a mitochondrion transit peptide. Helical transmembrane passes span 85 to 105 (IGLGGAGIGIGVVFGSLLLAV) and 119 to 139 (AILGFAFVEAIGLFDLMVAMM).

Belongs to the ATPase C chain family. F-type ATPases have 2 components, CF(1) - the catalytic core - and CF(0) - the membrane proton channel. CF(1) has five subunits: alpha(3), beta(3), gamma(1), delta(1), epsilon(1). CF(0) has three main subunits: a, b and c.

It localises to the mitochondrion membrane. Mitochondrial membrane ATP synthase (F(1)F(0) ATP synthase or Complex V) produces ATP from ADP in the presence of a proton gradient across the membrane which is generated by electron transport complexes of the respiratory chain. F-type ATPases consist of two structural domains, F(1) - containing the extramembraneous catalytic core and F(0) - containing the membrane proton channel, linked together by a central stalk and a peripheral stalk. During catalysis, ATP synthesis in the catalytic domain of F(1) is coupled via a rotary mechanism of the central stalk subunits to proton translocation. Part of the complex F(0) domain. A homomeric c-ring of probably 10 subunits is part of the complex rotary element. This chain is ATP synthase subunit 9, mitochondrial (atp9), found in Emericella nidulans (strain FGSC A4 / ATCC 38163 / CBS 112.46 / NRRL 194 / M139) (Aspergillus nidulans).